Here is a 386-residue protein sequence, read N- to C-terminus: MSTLVQCGYFERGQCQSCRHIKLPMVQQLAAKTQELQQLLAPFVVSTNTQFLPPVVGEDSGFRNKAKMVVLGAAHAPVLGIVSPNGEAVSLCDCLLYPADMQALLYRLERFVQQAGIPPYRIDKAKGELKYILLTRSQVRGEYMLRFVLRSPDAIARIERELPALMAEYPQINVVSVNIQPIHMAILEGDEEIFLTENTRLEERFNDVPLFIRPKSFFQTNPHVAAKLYQTAREWVGEFAPKSLWDLFCGVGGFGLHCASKDIPLTGIEIEAEAIACAKMSAQMMGLDNVQFMALDSTDFAKGDAAATKPDLIIVNPPRRGIGESLCDALSEFAPRAILYSSCNPKTLAKDLVHIRGYQLTRVQLFDLFPHSDHFEVLAMLVKDSR.

[4Fe-4S] cluster-binding residues include cysteine 7, cysteine 15, cysteine 18, and cysteine 94. Residues glutamine 219, phenylalanine 248, glutamate 269, and asparagine 316 each coordinate S-adenosyl-L-methionine. Cysteine 343 acts as the Nucleophile in catalysis.

This sequence belongs to the class I-like SAM-binding methyltransferase superfamily. RNA M5U methyltransferase family. RlmC subfamily.

The catalysed reaction is uridine(747) in 23S rRNA + S-adenosyl-L-methionine = 5-methyluridine(747) in 23S rRNA + S-adenosyl-L-homocysteine + H(+). Functionally, catalyzes the formation of 5-methyl-uridine at position 747 (m5U747) in 23S rRNA. The polypeptide is 23S rRNA (uracil(747)-C(5))-methyltransferase RlmC (Shewanella oneidensis (strain ATCC 700550 / JCM 31522 / CIP 106686 / LMG 19005 / NCIMB 14063 / MR-1)).